The sequence spans 226 residues: 3-dehydroquinate dehydratase (226 aa).

3-dehydroquinate is bound by residues 30–32 and arginine 62; that span reads EWR. The active-site Proton donor/acceptor is histidine 118. Lysine 143 (schiff-base intermediate with substrate) is an active-site residue. 3 residues coordinate 3-dehydroquinate: arginine 186, serine 205, and glutamine 209.

This sequence belongs to the type-I 3-dehydroquinase family. In terms of assembly, homodimer.

The enzyme catalyses 3-dehydroquinate = 3-dehydroshikimate + H2O. The protein operates within metabolic intermediate biosynthesis; chorismate biosynthesis; chorismate from D-erythrose 4-phosphate and phosphoenolpyruvate: step 3/7. Functionally, involved in the third step of the chorismate pathway, which leads to the biosynthesis of aromatic amino acids. Catalyzes the cis-dehydration of 3-dehydroquinate (DHQ) and introduces the first double bond of the aromatic ring to yield 3-dehydroshikimate. The sequence is that of 3-dehydroquinate dehydratase from Streptococcus equi subsp. zooepidemicus (strain H70).